We begin with the raw amino-acid sequence, 311 residues long: MSKILVFGHQNPDTDAIASSYAFDYLAKKAFDLDTEVVALGDPNEETAFALDYFGVSAPRVVTSAKAEGASHVILTDHNEFPQSISDIREVEVYGIVDHHRVANFETANPLYMRVEPVGSASSIVYRLFKENRVDVPKDIAGLLLSGLISDTLLLKSPTTHASDHRVAVELAELAGVKLEEYGMAMLKAGTNLASKSEAELIDIDAKTFELNGNAVRVAQVNTVDIAEVLERKEAIEAAIKEVMASEGYSDFVLMITDIVNSNSEILALGANMDKVEAAFSFKLEDNHAFLAGAVSRKKQVVPQLTESFGA.

6 residues coordinate Mn(2+): H9, D13, D15, D77, H99, and D151.

Belongs to the PPase class C family. The cofactor is Mn(2+).

It localises to the cytoplasm. The enzyme catalyses diphosphate + H2O = 2 phosphate + H(+). This is Probable manganese-dependent inorganic pyrophosphatase from Streptococcus equi subsp. zooepidemicus (strain H70).